Here is a 595-residue protein sequence, read N- to C-terminus: MIGKVVVSVASILLIVGVAIGVVAYINKNGDANLSPQMKAVRGICEATSDKASCVKTLEPVKSDDPNKLIKAFMLATRDAITQSSNFTGKTEGNLGSGISPNNKAVLDYCKKVFMYALEDLSTIVEEMGEDLNQIGSKIDQLKQWLTGVYNYQTDCLDDIEEDDLRKTIGEGIASSKILTSNAIDIFHTVVSAMAKLNLKVEDFKNMTGGIFAPSDKGAAPVNKGTPPVADDSPVADPDGPARRLLEDIDETGIPTWVSGADRKLMTKAGRGSNDGGARIRATFVVAKDGSGQFKTVQQAVNACPEKNPGRCIIHIKAGIYREQVIIPKKKNNIFMFGDGARKTVISYNRSVKLSPGTTTSLSGTVQVESEGFMAKWIGFKNTAGPMGHQAVAIRVNGDRAVIFNCRFDGYQDTLYVNNGRQFYRNIVVSGTVDFIFGKSATVIQNSLIVVRKGNKGQFNTVTADGNEKGLAMKIGIVLQNCRIVPDKKLAAERLIVESYLGRPWKKFSTTVIINSEIGDVIRPEGWKIWDGESFHKSCRYVEYNNRGPGAITNRRVNWVKIARSAAEVNDFTVANWLGPINWIQEANVPVTLGL.

The first 24 residues, 1–24, serve as a signal peptide directing secretion; the sequence is MIGKVVVSVASILLIVGVAIGVVA. N86 and N206 each carry an N-linked (GlcNAc...) asparagine glycan. The interval 215 to 239 is disordered; sequence SDKGAAPVNKGTPPVADDSPVADPD. Positions 227–239 are enriched in low complexity; sequence PPVADDSPVADPD. Residues 243–246 carry the RRLL cleavage motif motif; sequence RRLL. Residues 263 to 266 carry the RKLM cleavage motif motif; the sequence is RKLM. N349 is a glycosylation site (N-linked (GlcNAc...) asparagine). 2 residues coordinate substrate: T360 and Q390. D413 (proton donor) is an active-site residue. Catalysis depends on D434, which acts as the Nucleophile. Positions 503 and 505 each coordinate substrate.

The protein in the N-terminal section; belongs to the PMEI family. It in the C-terminal section; belongs to the pectinesterase family. In terms of assembly, interacts with SBT6.1. In terms of tissue distribution, expressed in pollen grains and pollen tubes.

It is found in the cell membrane. It localises to the secreted. The protein resides in the cell wall. The protein localises to the golgi apparatus membrane. The catalysed reaction is [(1-&gt;4)-alpha-D-galacturonosyl methyl ester](n) + n H2O = [(1-&gt;4)-alpha-D-galacturonosyl](n) + n methanol + n H(+). It participates in glycan metabolism; pectin degradation; 2-dehydro-3-deoxy-D-gluconate from pectin: step 1/5. Acts in the modification of cell walls via demethylesterification of cell wall pectin. Plays an important role in growth of pollen tubes in female floral tissues, possibly via enhancing the interaction between the pollen tube and female floral tissues by modification of the cell walls. May be regulated by MYB80 during anther development and play a role in tapetum and pollen development. The polypeptide is Pectinesterase 5 (PME5) (Arabidopsis thaliana (Mouse-ear cress)).